The following is a 49-amino-acid chain: Unknown protein from spot 75 of 2D-PAGE of etiolated coleoptile (49 aa).

The chain is Unknown protein from spot 75 of 2D-PAGE of etiolated coleoptile from Zea mays (Maize).